Here is a 257-residue protein sequence, read N- to C-terminus: Putative hydro-lyase Bcep18194_B2576 (257 aa).

This sequence belongs to the D-glutamate cyclase family.

The polypeptide is Putative hydro-lyase Bcep18194_B2576 (Burkholderia lata (strain ATCC 17760 / DSM 23089 / LMG 22485 / NCIMB 9086 / R18194 / 383)).